The sequence spans 221 residues: Pyridoxal phosphate homeostasis protein (221 aa).

N6-(pyridoxal phosphate)lysine is present on K26.

This sequence belongs to the pyridoxal phosphate-binding protein YggS/PROSC family.

In terms of biological role, pyridoxal 5'-phosphate (PLP)-binding protein, which is involved in PLP homeostasis. The sequence is that of Pyridoxal phosphate homeostasis protein from Corynebacterium glutamicum (strain ATCC 13032 / DSM 20300 / JCM 1318 / BCRC 11384 / CCUG 27702 / LMG 3730 / NBRC 12168 / NCIMB 10025 / NRRL B-2784 / 534).